Here is a 399-residue protein sequence, read N- to C-terminus: Semaphorin-like protein 139 (399 aa).

The signal sequence occupies residues 1 to 14; sequence MIPLLFILFYFTNC. The region spanning 15–399 is the Sema domain; the sequence is IEWHKFETSE…IPRMKKILKM (385 aa).

It belongs to the semaphorin family. As to quaternary structure, interacts with host VESPR.

It localises to the secreted. In terms of biological role, acts as a semaphorin-like protein and binds to host plexin C1 receptor. May alter the movement of plexin C1-expressing cells including dendritic cells, monocytes, or granulocytes in the proximity of infected cells. May also regulate host cell cytoskeleton of neighboring cells to improve viral infection. This Ectromelia virus (strain Moscow) (ECTV) protein is Semaphorin-like protein 139 (EVM139).